The chain runs to 420 residues: Annetocin receptor (420 aa).

Residues 1-54 (MEMDDDEAILLDDIYALASTPNQTIVTSSFPQTVSPGFLARRNEALAMVEVAVQ) lie on the Extracellular side of the membrane. Residue N22 is glycosylated (N-linked (GlcNAc...) asparagine). A helical transmembrane segment spans residues 55-75 (STILILTVVGNAAVLAMIVSL). Topologically, residues 76-83 (SRHKDLGR) are cytoplasmic. Residues 84–104 (MYTMIGHLSCADLFVAIFNLL) form a helical membrane-spanning segment. The Extracellular segment spans residues 105–124 (PQLLWDVTHRFRGGRVLCKL). C122 and C201 form a disulfide bridge. The chain crosses the membrane as a helical span at residues 125–145 (VKYVQVVAMYASAYVLMSTAV). The Cytoplasmic portion of the chain corresponds to 146–166 (DRYTAICHPMRSHTWTSTTAH). Residues 167-187 (YLVIGAWVLALVFAVPQLVIF) traverse the membrane as a helical segment. The Extracellular portion of the chain corresponds to 188 to 212 (DYVEVVPGSGVYDCVDHFRPRWTLP). A helical membrane pass occupies residues 213 to 233 (VYITWFALAVYVIPLVVLATI). At 234-328 (YLRICVVVWK…KTKTVKLTLT (95 aa)) the chain is on the cytoplasmic side. Residues 329–349 (VVISYLVCWAPFFVSHIWSAW) traverse the membrane as a helical segment. Topologically, residues 350–360 (DPHAPFEGTEM) are extracellular. The helical transmembrane segment at 361–381 (VITLLLGSLNSCINPWIYLAF) threads the bilayer. At 382 to 420 (SDQLRRKVTQCCPRSWGQRPSTLSHDSTDFRSGSRPTHS) the chain is on the cytoplasmic side. The segment at 397 to 420 (WGQRPSTLSHDSTDFRSGSRPTHS) is disordered. Over residues 399-420 (QRPSTLSHDSTDFRSGSRPTHS) the composition is skewed to polar residues.

This sequence belongs to the G-protein coupled receptor 1 family. Vasopressin/oxytocin receptor subfamily. As to expression, nephridia in clitellum region.

It is found in the cell membrane. Its function is as follows. Receptor for annetocin. Activation by annetocin may induce egg-laying behavior through calcium-dependent signaling. This is Annetocin receptor from Eisenia fetida (Red wiggler worm).